The following is a 597-amino-acid chain: Probable translation initiation factor IF-2 (597 aa).

The tr-type G domain occupies 4 to 221 (IRQPIIAVLG…LISGLAQKYL (218 aa)). Residues 13–20 (GHVDHGKT) are G1. 13-20 (GHVDHGKT) lines the GTP pocket. The G2 stretch occupies residues 38 to 42 (GITQH). A G3 region spans residues 77–80 (DTPG). Residues 77–81 (DTPGH) and 131–134 (NKID) each bind GTP. The tract at residues 131–134 (NKID) is G4. Residues 199 to 201 (SAK) are G5.

Belongs to the TRAFAC class translation factor GTPase superfamily. Classic translation factor GTPase family. IF-2 subfamily.

In terms of biological role, function in general translation initiation by promoting the binding of the formylmethionine-tRNA to ribosomes. Seems to function along with eIF-2. The polypeptide is Probable translation initiation factor IF-2 (Thermococcus sibiricus (strain DSM 12597 / MM 739)).